The sequence spans 289 residues: Phosphatidylserine decarboxylase proenzyme (289 aa).

Catalysis depends on charge relay system; for autoendoproteolytic cleavage activity residues Asp92, His149, and Ser254. Residue Ser254 is the Schiff-base intermediate with substrate; via pyruvic acid; for decarboxylase activity of the active site. Residue Ser254 is modified to Pyruvic acid (Ser); by autocatalysis.

This sequence belongs to the phosphatidylserine decarboxylase family. PSD-B subfamily. Prokaryotic type I sub-subfamily. As to quaternary structure, heterodimer of a large membrane-associated beta subunit and a small pyruvoyl-containing alpha subunit. The cofactor is pyruvate. In terms of processing, is synthesized initially as an inactive proenzyme. Formation of the active enzyme involves a self-maturation process in which the active site pyruvoyl group is generated from an internal serine residue via an autocatalytic post-translational modification. Two non-identical subunits are generated from the proenzyme in this reaction, and the pyruvate is formed at the N-terminus of the alpha chain, which is derived from the carboxyl end of the proenzyme. The autoendoproteolytic cleavage occurs by a canonical serine protease mechanism, in which the side chain hydroxyl group of the serine supplies its oxygen atom to form the C-terminus of the beta chain, while the remainder of the serine residue undergoes an oxidative deamination to produce ammonia and the pyruvoyl prosthetic group on the alpha chain. During this reaction, the Ser that is part of the protease active site of the proenzyme becomes the pyruvoyl prosthetic group, which constitutes an essential element of the active site of the mature decarboxylase.

The protein localises to the cell membrane. The enzyme catalyses a 1,2-diacyl-sn-glycero-3-phospho-L-serine + H(+) = a 1,2-diacyl-sn-glycero-3-phosphoethanolamine + CO2. The protein operates within phospholipid metabolism; phosphatidylethanolamine biosynthesis; phosphatidylethanolamine from CDP-diacylglycerol: step 2/2. In terms of biological role, catalyzes the formation of phosphatidylethanolamine (PtdEtn) from phosphatidylserine (PtdSer). This chain is Phosphatidylserine decarboxylase proenzyme, found in Pseudomonas aeruginosa (strain UCBPP-PA14).